Here is a 351-residue protein sequence, read N- to C-terminus: UDP-3-O-acylglucosamine N-acyltransferase (351 aa).

His239 acts as the Proton acceptor in catalysis.

This sequence belongs to the transferase hexapeptide repeat family. LpxD subfamily. In terms of assembly, homotrimer.

It carries out the reaction a UDP-3-O-[(3R)-3-hydroxyacyl]-alpha-D-glucosamine + a (3R)-hydroxyacyl-[ACP] = a UDP-2-N,3-O-bis[(3R)-3-hydroxyacyl]-alpha-D-glucosamine + holo-[ACP] + H(+). It participates in bacterial outer membrane biogenesis; LPS lipid A biosynthesis. In terms of biological role, catalyzes the N-acylation of UDP-3-O-acylglucosamine using 3-hydroxyacyl-ACP as the acyl donor. Is involved in the biosynthesis of lipid A, a phosphorylated glycolipid that anchors the lipopolysaccharide to the outer membrane of the cell. In Vibrio cholerae serotype O1 (strain ATCC 39315 / El Tor Inaba N16961), this protein is UDP-3-O-acylglucosamine N-acyltransferase.